We begin with the raw amino-acid sequence, 1706 residues long: Probable ATP-dependent RNA helicase DDX60-like (1706 aa).

The segment at Arg545–Gln580 is disordered. Over residues Ser551 to His564 the composition is skewed to polar residues. A compositionally biased stretch (basic residues) spans Gln565–Ser574. A Helicase ATP-binding domain is found at Leu752–Lys919. ATP is bound at residue Ala765–Thr772. The DEAH box motif lies at Asp869 to His872. In terms of domain architecture, Helicase C-terminal spans Asp1205–Leu1354.

This sequence belongs to the helicase family.

The enzyme catalyses ATP + H2O = ADP + phosphate + H(+). This is Probable ATP-dependent RNA helicase DDX60-like from Homo sapiens (Human).